The primary structure comprises 433 residues: Monodehydroascorbate reductase (433 aa).

Residues 12 to 15 (GGVS), Glu-39, Arg-46, Lys-51, Ile-94, and 145 to 146 (RE) contribute to the FAD site. Residues 170-176 (GGYIGLE), Glu-194, Arg-200, and Gly-259 contribute to the NAD(+) site. An NADP(+)-binding site is contributed by 172–176 (YIGLE). The NADP(+) site is built by Arg-200 and Gly-259. Asp-296 serves as a coordination point for FAD. Residue 312–313 (EH) participates in NAD(+) binding. 312–313 (EH) lines the NADP(+) pocket. Val-314 contacts FAD. Arg-318 is an L-ascorbate binding site. Tyr-347 lines the FAD pocket. NAD(+) is bound at residue Tyr-347. Residue Tyr-347 coordinates NADP(+). Arg-349 contributes to the L-ascorbate binding site.

The protein belongs to the FAD-dependent oxidoreductase family. It depends on FAD as a cofactor. As to expression, expressed at relatively low levels in all tissues examined.

It localises to the cytoplasm. It carries out the reaction 2 monodehydro-L-ascorbate radical + NADH + H(+) = 2 L-ascorbate + NAD(+). Catalyzes the conversion of monodehydroascorbate to ascorbate, oxidizing NADH in the process. The polypeptide is Monodehydroascorbate reductase (Pisum sativum (Garden pea)).